The primary structure comprises 643 residues: Threonine--tRNA ligase (643 aa).

In terms of domain architecture, TGS spans 1–61 (MIKITLKDGS…NEDSSLEICT (61 aa)). A catalytic region spans residues 240-540 (DHNKLGRELG…LIEKYAGALP (301 aa)). Zn(2+)-binding residues include cysteine 335, histidine 386, and histidine 517.

Belongs to the class-II aminoacyl-tRNA synthetase family. As to quaternary structure, homodimer. It depends on Zn(2+) as a cofactor.

It is found in the cytoplasm. The catalysed reaction is tRNA(Thr) + L-threonine + ATP = L-threonyl-tRNA(Thr) + AMP + diphosphate + H(+). Its function is as follows. Catalyzes the attachment of threonine to tRNA(Thr) in a two-step reaction: L-threonine is first activated by ATP to form Thr-AMP and then transferred to the acceptor end of tRNA(Thr). Also edits incorrectly charged L-seryl-tRNA(Thr). The chain is Threonine--tRNA ligase from Clostridium perfringens (strain SM101 / Type A).